The sequence spans 351 residues: MRKIIHVDMDCFFAAVEMRDNPALRDIPIAIGGSRERRGVISTANYPARKFGVRSAMPTGMALKLCPHLTLLPGRFDAYKEASNHIREIFSRYTSRIEPLSLDEAYLDVTDSVHCHGSATLIAQEIRQTIFNELQLTASAGVAPVKFLAKIASDMNKPNGQFVITPAEVPAFLQTLPLEKIPGVGKVSAAKLEAMGLRTCGDVQKCDLVILLKRFGKFGRILWERSQGIDERDVNSERLRKSVGVERTMAEDIHHWSECEAIIERLYPELERRLAKVKPDLLIARQGVKLKFDDFQQTTQEHVWPRLNKADLIATARKTWDERRGGRGVRLVGLHVTLLDPQMERQLVLGL.

Residues 4–185 (IIHVDMDCFF…LPLEKIPGVG (182 aa)) enclose the UmuC domain. 2 residues coordinate Mg(2+): Asp-8 and Asp-103. Glu-104 is a catalytic residue.

Belongs to the DNA polymerase type-Y family. Monomer. The cofactor is Mg(2+).

It is found in the cytoplasm. The catalysed reaction is DNA(n) + a 2'-deoxyribonucleoside 5'-triphosphate = DNA(n+1) + diphosphate. Its function is as follows. Poorly processive, error-prone DNA polymerase involved in untargeted mutagenesis. Copies undamaged DNA at stalled replication forks, which arise in vivo from mismatched or misaligned primer ends. These misaligned primers can be extended by PolIV. Exhibits no 3'-5' exonuclease (proofreading) activity. May be involved in translesional synthesis, in conjunction with the beta clamp from PolIII. The chain is DNA polymerase IV from Shigella flexneri.